The following is a 292-amino-acid chain: 2-(5''-triphosphoribosyl)-3'-dephosphocoenzyme-A synthase (292 aa).

It belongs to the CitG/MdcB family.

The enzyme catalyses 3'-dephospho-CoA + ATP = 2'-(5''-triphospho-alpha-D-ribosyl)-3'-dephospho-CoA + adenine. Catalyzes the formation of 2-(5''-triphosphoribosyl)-3'-dephosphocoenzyme-A, the precursor of the prosthetic group of the holo-acyl carrier protein (gamma chain) of citrate lyase, from ATP and dephospho-CoA. In Escherichia coli (strain ATCC 8739 / DSM 1576 / NBRC 3972 / NCIMB 8545 / WDCM 00012 / Crooks), this protein is 2-(5''-triphosphoribosyl)-3'-dephosphocoenzyme-A synthase.